Reading from the N-terminus, the 236-residue chain is Eukaryotic translation initiation factor 3 subunit J (236 aa).

The tract at residues 1–86 (MADDWESAAD…KEEEEQKRLA (86 aa)) is disordered. Over residues 28-46 (GEDDDEDVKESWEDEEEKK) the composition is skewed to acidic residues. Basic and acidic residues-rich tracts occupy residues 47–58 (DEEKPTKTEAPV) and 68–86 (AKLE…KRLA). Residues 61-115 (KPNKALKAKLEEQERLKEEEEQKRLAEMTPEEKLAEKLRLQKIQEESDLKSALET) adopt a coiled-coil conformation.

This sequence belongs to the eIF-3 subunit J family. As to quaternary structure, component of the eukaryotic translation initiation factor 3 (eIF-3) complex. The eIF-3 complex interacts with pix.

It localises to the cytoplasm. Its function is as follows. Component of the eukaryotic translation initiation factor 3 (eIF-3) complex, which is involved in protein synthesis of a specialized repertoire of mRNAs and, together with other initiation factors, stimulates binding of mRNA and methionyl-tRNAi to the 40S ribosome. The eIF-3 complex specifically targets and initiates translation of a subset of mRNAs involved in cell proliferation. The sequence is that of Eukaryotic translation initiation factor 3 subunit J from Drosophila mojavensis (Fruit fly).